The primary structure comprises 429 residues: Ribosomal RNA small subunit methyltransferase B (429 aa).

S-adenosyl-L-methionine-binding positions include 254–260 (CAAPGGK), aspartate 277, aspartate 303, and aspartate 322. Cysteine 375 acts as the Nucleophile in catalysis.

This sequence belongs to the class I-like SAM-binding methyltransferase superfamily. RsmB/NOP family.

It is found in the cytoplasm. It catalyses the reaction cytidine(967) in 16S rRNA + S-adenosyl-L-methionine = 5-methylcytidine(967) in 16S rRNA + S-adenosyl-L-homocysteine + H(+). Specifically methylates the cytosine at position 967 (m5C967) of 16S rRNA. In Shigella boydii serotype 18 (strain CDC 3083-94 / BS512), this protein is Ribosomal RNA small subunit methyltransferase B.